The chain runs to 191 residues: Small ribosomal subunit protein uS7 (191 aa).

The interval 56–80 (NKSGEQGDGDGEGGGKAGGIKKRSL) is disordered.

This sequence belongs to the universal ribosomal protein uS7 family. As to quaternary structure, part of the 30S ribosomal subunit. Contacts proteins S9 and S11.

One of the primary rRNA binding proteins, it binds directly to 16S rRNA where it nucleates assembly of the head domain of the 30S subunit. Is located at the subunit interface close to the decoding center, probably blocks exit of the E-site tRNA. The polypeptide is Small ribosomal subunit protein uS7 (Coxiella burnetii (strain CbuG_Q212) (Coxiella burnetii (strain Q212))).